A 298-amino-acid polypeptide reads, in one-letter code: HTH-type transcriptional regulator ArgP (298 aa).

The HTH lysR-type domain maps to L4–T60. A DNA-binding region (H-T-H motif) is located at residues F21 to K40.

Belongs to the LysR transcriptional regulatory family. As to quaternary structure, homodimer.

Functionally, controls the transcription of genes involved in arginine and lysine metabolism. The sequence is that of HTH-type transcriptional regulator ArgP from Vibrio vulnificus (strain CMCP6).